The chain runs to 1064 residues: Lethal(2) giant larvae protein homolog 1 (1064 aa).

WD repeat units follow at residues 38 to 71, 78 to 119, 139 to 176, 200 to 234, 240 to 272, 290 to 332, 340 to 374, 396 to 474, 518 to 593, 602 to 663, 723 to 783, 792 to 844, 849 to 902, and 916 to 939; these read SALA…FTGL, VTQM…ALSF, VTVV…GQTL, SLQG…DHIF, LESL…GSFP, AINK…ETLV, IIDF…VLDL, TCSA…YKLS, QKVA…RVLV, TAVT…LRQS, VRCL…KEVQ, AIAV…VSAK, LTAH…VHYS, and VFTR…SLSA. A Phosphoserine modification is found at serine 663. At threonine 958 the chain carries Phosphothreonine. The disordered stretch occupies residues 966–1010; it reads ESPKLSQANGTPSILLAPQSLDGSPDPAHSMGPDTPEPPEAALSP. Phosphoserine is present on residues serine 967 and serine 985.

The protein belongs to the WD repeat L(2)GL family. Associated with nonmuscle myosin II heavy chain. Interacts with PRKCI/aPKC, PARD6B/Par-6 and PARD6A. Interacts with STX4A. Interacts with RAB10 (GDP-bound form); the interaction is direct and promotes RAB10 association with membranes and activation through competition with the Rab inhibitor GDI1. Interacts with DCAF1. In terms of processing, phosphorylated at least at Ser-663 by PRKCI. As to expression, expressed in brain, kidney, and muscle but is barely seen in heart and placenta. Down-regulated or lost in all cell lines and in most of the tumor samples analyzed. Loss was associated with advanced stage of the disease.

The protein resides in the early endosome membrane. Its subcellular location is the golgi apparatus. It localises to the trans-Golgi network membrane. It is found in the golgi apparatus membrane. The protein localises to the cell projection. The protein resides in the axon. Its subcellular location is the cytoplasm. It localises to the cytoskeleton. In terms of biological role, cortical cytoskeleton protein found in a complex involved in maintaining cell polarity and epithelial integrity. Involved in the regulation of mitotic spindle orientation, proliferation, differentiation and tissue organization of neuroepithelial cells. Involved in axonogenesis through RAB10 activation thereby regulating vesicular membrane trafficking toward the axonal plasma membrane. The polypeptide is Lethal(2) giant larvae protein homolog 1 (LLGL1) (Homo sapiens (Human)).